A 522-amino-acid polypeptide reads, in one-letter code: Transmembrane protein 213R (522 aa).

2 consecutive transmembrane segments (helical) span residues 33–50 (NTITRLILIASLVLLLFG) and 55–72 (SLYILIIGLIIVIVIYSQ).

Belongs to the IIV-6 213R family.

The protein localises to the membrane. The protein is Transmembrane protein 213R of Invertebrate iridescent virus 6 (IIV-6).